A 524-amino-acid polypeptide reads, in one-letter code: Bifunctional purine biosynthesis protein PurH (524 aa).

Residues 1 to 144 (MVRRALVSVS…KNAAHVGVVV (144 aa)) form the MGS-like domain.

The protein belongs to the PurH family.

The catalysed reaction is (6R)-10-formyltetrahydrofolate + 5-amino-1-(5-phospho-beta-D-ribosyl)imidazole-4-carboxamide = 5-formamido-1-(5-phospho-D-ribosyl)imidazole-4-carboxamide + (6S)-5,6,7,8-tetrahydrofolate. The enzyme catalyses IMP + H2O = 5-formamido-1-(5-phospho-D-ribosyl)imidazole-4-carboxamide. Its pathway is purine metabolism; IMP biosynthesis via de novo pathway; 5-formamido-1-(5-phospho-D-ribosyl)imidazole-4-carboxamide from 5-amino-1-(5-phospho-D-ribosyl)imidazole-4-carboxamide (10-formyl THF route): step 1/1. It participates in purine metabolism; IMP biosynthesis via de novo pathway; IMP from 5-formamido-1-(5-phospho-D-ribosyl)imidazole-4-carboxamide: step 1/1. The chain is Bifunctional purine biosynthesis protein PurH from Anaeromyxobacter sp. (strain Fw109-5).